We begin with the raw amino-acid sequence, 591 residues long: Adenine deaminase (591 aa).

This sequence belongs to the metallo-dependent hydrolases superfamily. Adenine deaminase family. As to quaternary structure, homodimer. Mn(2+) serves as cofactor.

The catalysed reaction is adenine + H2O + H(+) = hypoxanthine + NH4(+). In Edwardsiella ictaluri (strain 93-146), this protein is Adenine deaminase.